Here is a 262-residue protein sequence, read N- to C-terminus: Spindlin-Z (262 aa).

The tract at residues Met1 to Arg50 is disordered. A compositionally biased stretch (basic residues) spans Met27–Asn38.

Belongs to the SPIN/STSY family. In terms of tissue distribution, expressed in several tissues including testis.

It localises to the nucleus. Functionally, may play a role in mitosis. In Gallus gallus (Chicken), this protein is Spindlin-Z (SPINZ).